We begin with the raw amino-acid sequence, 723 residues long: MKKWLVIVLIIAGIRCDGFSDQVFRTLFIGEGNACYRTFNKTHEFGCQANRENENGLIVRIDKQEDFKNLDSCWNSFYPKYSGKYWALLPVNLIRRDTISQLKSSKCLSGIVLYNSGESIHPGDESTAASHDAECPNAASDYYLQDKNEEYCERKINSRGAITRDGLMKIDWRIQMVFIDNSTDLEIIEKCYSMFNKPKEDGSSGYPYCGMSFRLANMAAGNSEICYRRGKNDAKLFQMNIDSGDAPQLCGAMHSDNIFAFPTPIPTSPTNETIITSKYMMVTARMDSFGMIPEISVGEVSVLTSIISVLAAARSMGTQIEKWQKASNTSNRNVFFAFFNGESLDYIGSGAAAYQMENGKFPQMIRSDRTHIHPIRPNELDYILEVQQIGVAKGRKYYVHVDGERYQQNKTQTDRVIDRIERGLRSHAFDLEKPSGSGDRVPPASWHSFAKADAHVQSVLLAPYGKEYEYQRVNSILDKNEWTEDEREKAIQEIEAVSTAILAAAADYVGVETDEVVAKVDKKLITTIFDCLITSNFWFDCDFMQKLDGGRYHKLFNSYGFNQKSTYISMESHTAFPTVLHWLTIFALGSDKETLNVKSEKSCSHLGQFQAFQMYTYTWQPNPYTGNFSCLKSAIVKKVMVSPAVDSQTPEEEMNTRYSTWMESVYIIESVNLYLMEDASFEYTMILIAVISALLSIFAVGRCSETTFIVDEGEPAAEGGEPL.

Positions 1–16 (MKKWLVIVLIIAGIRC) are cleaved as a signal peptide. At 17–678 (DGFSDQVFRT…ESVNLYLMED (662 aa)) the chain is on the extracellular side. Residues Asn-40, Asn-181, Asn-271, Asn-328, Asn-409, and Asn-627 are each glycosylated (N-linked (GlcNAc...) asparagine). The helical transmembrane segment at 679–699 (ASFEYTMILIAVISALLSIFA) threads the bilayer. Residues 700–723 (VGRCSETTFIVDEGEPAAEGGEPL) are Cytoplasmic-facing.

Belongs to the nicastrin family. As to quaternary structure, component of the gamma-secretase complex, a complex probably composed of the presenilin homodimer (sel-12, hop-1 or spe-4), nicastrin (aph-2), aph-1 and pen-2.

It is found in the membrane. In terms of biological role, essential subunit of the gamma-secretase complex, an endoprotease complex that catalyzes the intramembrane cleavage of integral membrane proteins such as Notch (glp-1 or lin-12). It may represents a stabilizing cofactor required for the assembly of the gamma-secretase complex. The chain is Nicastrin (aph-2) from Caenorhabditis elegans.